The chain runs to 465 residues: Asparagine--tRNA ligase (465 aa).

This sequence belongs to the class-II aminoacyl-tRNA synthetase family. As to quaternary structure, homodimer.

It localises to the cytoplasm. The catalysed reaction is tRNA(Asn) + L-asparagine + ATP = L-asparaginyl-tRNA(Asn) + AMP + diphosphate + H(+). This chain is Asparagine--tRNA ligase, found in Pseudoalteromonas atlantica (strain T6c / ATCC BAA-1087).